The primary structure comprises 201 residues: ATP-dependent Clp protease proteolytic subunit (201 aa).

S101 acts as the Nucleophile in catalysis. The active site involves H126.

The protein belongs to the peptidase S14 family. As to quaternary structure, component of the chloroplastic Clp protease core complex.

It is found in the plastid. The protein resides in the chloroplast stroma. The catalysed reaction is Hydrolysis of proteins to small peptides in the presence of ATP and magnesium. alpha-casein is the usual test substrate. In the absence of ATP, only oligopeptides shorter than five residues are hydrolyzed (such as succinyl-Leu-Tyr-|-NHMec, and Leu-Tyr-Leu-|-Tyr-Trp, in which cleavage of the -Tyr-|-Leu- and -Tyr-|-Trp bonds also occurs).. Functionally, cleaves peptides in various proteins in a process that requires ATP hydrolysis. Has a chymotrypsin-like activity. Plays a major role in the degradation of misfolded proteins. The polypeptide is ATP-dependent Clp protease proteolytic subunit (Chlorella vulgaris (Green alga)).